Here is a 220-residue protein sequence, read N- to C-terminus: Deoxyribose-phosphate aldolase (220 aa).

Aspartate 89 (proton donor/acceptor) is an active-site residue. Residue lysine 151 is the Schiff-base intermediate with acetaldehyde of the active site. Lysine 180 functions as the Proton donor/acceptor in the catalytic mechanism.

The protein belongs to the DeoC/FbaB aldolase family. DeoC type 1 subfamily.

The protein localises to the cytoplasm. It carries out the reaction 2-deoxy-D-ribose 5-phosphate = D-glyceraldehyde 3-phosphate + acetaldehyde. It functions in the pathway carbohydrate degradation; 2-deoxy-D-ribose 1-phosphate degradation; D-glyceraldehyde 3-phosphate and acetaldehyde from 2-deoxy-alpha-D-ribose 1-phosphate: step 2/2. Its function is as follows. Catalyzes a reversible aldol reaction between acetaldehyde and D-glyceraldehyde 3-phosphate to generate 2-deoxy-D-ribose 5-phosphate. The polypeptide is Deoxyribose-phosphate aldolase (Staphylococcus saprophyticus subsp. saprophyticus (strain ATCC 15305 / DSM 20229 / NCIMB 8711 / NCTC 7292 / S-41)).